A 356-amino-acid polypeptide reads, in one-letter code: Syntaxin-7A (356 aa).

Residues 1–333 (MYNNNNNFGG…NQKSSRNKMC (333 aa)) are Cytoplasmic-facing. Composition is skewed to low complexity over residues 32–74 (NNNN…FDNN) and 207–224 (NNNS…NNQQ). 2 disordered regions span residues 32 to 88 (NNNN…NSDY) and 187 to 247 (EKTT…RRQQ). Positions 233–244 (EDEHQSLMESSR) are enriched in basic and acidic residues. Positions 259–321 (NSIIQERDEG…KEGVNHLREA (63 aa)) constitute a t-SNARE coiled-coil homology domain. A helical; Anchor for type IV membrane protein transmembrane segment spans residues 334-354 (WIVLILLIVCAVLGVILFFTL). Topologically, residues 355 to 356 (RK) are vesicular.

Belongs to the syntaxin family. As to quaternary structure, component of the SNARE complex composed of syn7A, syn8A, vamp7A and vti1A. Interacts with nsfA, snpA and snpC.

It is found in the endosome membrane. In terms of biological role, involved in the targeting and/or fusion of transport vesicles to their target membrane during transport of proteins from the early endosome to the lysosome. Required for fusion of late endosomes with lysosomes and homotypic lysosomal fusion. May be involved in protein trafficking from the plasma membrane to the early endosome (EE) as well as in homotypic fusion of endocytic organelles. This is Syntaxin-7A from Dictyostelium discoideum (Social amoeba).